We begin with the raw amino-acid sequence, 92 residues long: Small ribosomal subunit protein uS19 (92 aa).

Belongs to the universal ribosomal protein uS19 family.

In terms of biological role, protein S19 forms a complex with S13 that binds strongly to the 16S ribosomal RNA. This Anoxybacillus flavithermus (strain DSM 21510 / WK1) protein is Small ribosomal subunit protein uS19.